Consider the following 858-residue polypeptide: ATP-dependent DNA helicase Q-like SIM (858 aa).

Residues 2 to 44 enclose the UBA domain; it reads DLSSDQLVMKIVEMGFEKLDALEAVKAVGGKSCDDAVEYILKG. Residues 177–353 form the Helicase ATP-binding domain; sequence LSTWVAHKDC…LESLHLSKET (177 aa). Position 190 to 197 (190 to 197) interacts with ATP; that stretch reads AATGSGKS. The DEAH box motif lies at 288 to 291; the sequence is DEAH. The tract at residues 402 to 450 is disordered; the sequence is LAVISRESEEQTDFGSHDSENIHETDYDEDEEDQENSLAKKNSSNGKEL. The span at 416-426 shows a compositional bias: basic and acidic residues; sequence GSHDSENIHET. Residues 427-436 show a composition bias toward acidic residues; that stretch reads DYDEDEEDQE. Polar residues predominate over residues 437–448; the sequence is NSLAKKNSSNGK. The Helicase C-terminal domain occupies 491 to 627; sequence EKQKDLEGLT…QTEQAYKMLS (137 aa). A disordered region spans residues 822 to 858; that stretch reads RQRLERRERKPRRERKPRKKRTRGRSSTKLHPWRSKE. Residues 830 to 858 are compositionally biased toward basic residues; sequence RKPRRERKPRKKRTRGRSSTKLHPWRSKE.

This sequence belongs to the helicase family. RecQ subfamily. It depends on Mg(2+) as a cofactor. Mn(2+) serves as cofactor. Mostly expressed in roots and seedlings, and, to a lower extent, in leaves, shoots, shoot apical mersitem, inflorescences, flowers, siliques and seeds.

The protein resides in the nucleus. It carries out the reaction Couples ATP hydrolysis with the unwinding of duplex DNA by translocating in the 3'-5' direction.. The catalysed reaction is ATP + H2O = ADP + phosphate + H(+). Plant specific, probable 3'-5' DNA helicase that may play a role in the repair of DNA. The polypeptide is ATP-dependent DNA helicase Q-like SIM (RECQSIM) (Arabidopsis thaliana (Mouse-ear cress)).